The sequence spans 190 residues: Dynein axonemal light chain 1 (190 aa).

Ala-2 is modified (N-acetylalanine). LRR repeat units lie at residues 47–69 (LANCEKLSLSTNCIEKIANLNGL), 70–93 (KNLRILSLGRNNIKNLNGLEAVGD), 95–114 (LEELWISYNFIEKLKGIHVM), and 115–138 (RKLKILYISNNLVKDWAEFVKLAE). Phosphoserine is present on Ser-56.

Belongs to the dynein light chain LC1-type family. As to quaternary structure, interacts with ZMYND10 (via C-terminus). Interacts with DNAH5, a outer arm dynein heavy chain. Interacts with tubulin located within the A-tubule of the outer doublets in a ATP-independent manner.

The protein localises to the cytoplasm. It is found in the cytoskeleton. The protein resides in the cilium axoneme. Part of the multisubunit axonemal ATPase complexes that generate the force for cilia motility and govern beat frequency. Component of the outer arm dynein (ODA). May be involved in a mechanosensory feedback mechanism controlling ODA activity based on external conformational cues by tethering the outer arm dynein heavy chain (DNAH5) to the microtubule within the axoneme. Important for ciliary function in the airways and for the function of the cilia that produce the nodal flow essential for the determination of the left-right asymmetry. The sequence is that of Dynein axonemal light chain 1 from Rattus norvegicus (Rat).